Reading from the N-terminus, the 417-residue chain is Probable uracil permease (417 aa).

Topologically, residues Met1–Asn13 are cytoplasmic. A helical membrane pass occupies residues His14–Leu37. Residues Ile38–Leu41 are Periplasmic-facing. The chain crosses the membrane as a helical span at residues Asn42–Thr61. The Cytoplasmic segment spans residues Gly62 to Gln64. Residues Val65–Tyr81 traverse the membrane as a discontinuously helical segment. Position 73 (Phe73) interacts with uracil. Over Val83 to Thr90 the chain is Periplasmic. A helical transmembrane segment spans residues Thr91–Ile111. Topologically, residues Lys112–Pro123 are cytoplasmic. Residues Val124–Ala145 form a helical membrane-spanning segment. The Periplasmic portion of the chain corresponds to Leu146–Tyr154. The helical transmembrane segment at Asn155 to Gly170 threads the bilayer. At Val171–Gly177 the chain is on the cytoplasmic side. A helical membrane pass occupies residues Met178–Leu198. The Periplasmic portion of the chain corresponds to Gly199 to Lys223. Residues Leu224–Ala247 traverse the membrane as a helical segment. Glu240 is a uracil binding site. Residues Ile248 to Pro260 are Cytoplasmic-facing. A helical membrane pass occupies residues Gly261–Gly280. The chain crosses the membrane as a discontinuously helical span at residues Gly281–Thr297. Glu289 is a binding site for uracil. Residues Arg298–Phe300 lie on the Cytoplasmic side of the membrane. The helical transmembrane segment at Asn301–Cys318 threads the bilayer. At Gly319–Ile331 the chain is on the periplasmic side. The chain crosses the membrane as a helical span at residues Val332 to Ile353. Residues Arg354–Asn364 lie on the Cytoplasmic side of the membrane. The discontinuously helical intramembrane region spans Leu365–Leu400. The Cytoplasmic segment spans residues Leu401–Asn416.

The protein belongs to the nucleobase:cation symporter-2 (NCS2) (TC 2.A.40) family.

It is found in the cell inner membrane. The enzyme catalyses uracil(in) + H(+)(in) = uracil(out) + H(+)(out). Transport of uracil in the cell. In Pasteurella multocida (strain Pm70), this protein is Probable uracil permease (uraA).